We begin with the raw amino-acid sequence, 310 residues long: Probable deoxyhypusine synthase (310 aa).

Catalysis depends on Lys-284, which acts as the Nucleophile.

It belongs to the deoxyhypusine synthase family. Requires NAD(+) as cofactor.

The catalysed reaction is [eIF5A protein]-L-lysine + spermidine = [eIF5A protein]-deoxyhypusine + propane-1,3-diamine. It functions in the pathway protein modification; eIF5A hypusination. Functionally, catalyzes the NAD-dependent oxidative cleavage of spermidine and the subsequent transfer of the butylamine moiety of spermidine to the epsilon-amino group of a specific lysine residue of the eIF-5A precursor protein to form the intermediate deoxyhypusine residue. This is Probable deoxyhypusine synthase (dys) from Thermoplasma volcanium (strain ATCC 51530 / DSM 4299 / JCM 9571 / NBRC 15438 / GSS1).